Reading from the N-terminus, the 237-residue chain is Ribonuclease 3 (237 aa).

In terms of domain architecture, RNase III spans 7–135 (IKEVEAKLKF…ILGAVYLDGG (129 aa)). Position 48 (Glu-48) interacts with Mg(2+). The active site involves Asp-52. Mg(2+) contacts are provided by Asn-121 and Glu-124. The active site involves Glu-124. Positions 160–229 (NPKNRLQQLT…AQEALDANDY (70 aa)) constitute a DRBM domain.

Belongs to the ribonuclease III family. In terms of assembly, homodimer. Mg(2+) serves as cofactor.

The protein localises to the cytoplasm. The enzyme catalyses Endonucleolytic cleavage to 5'-phosphomonoester.. Functionally, digests double-stranded RNA. Involved in the processing of primary rRNA transcript to yield the immediate precursors to the large and small rRNAs (23S and 16S). Processes some mRNAs, and tRNAs when they are encoded in the rRNA operon. Processes pre-crRNA and tracrRNA of type II CRISPR loci if present in the organism. This is Ribonuclease 3 from Chlamydia felis (strain Fe/C-56) (Chlamydophila felis).